The following is a 94-amino-acid chain: Large ribosomal subunit protein bL25 (94 aa).

Belongs to the bacterial ribosomal protein bL25 family. Part of the 50S ribosomal subunit; part of the 5S rRNA/L5/L18/L25 subcomplex. Contacts the 5S rRNA. Binds to the 5S rRNA independently of L5 and L18.

This is one of the proteins that binds to the 5S RNA in the ribosome where it forms part of the central protuberance. This chain is Large ribosomal subunit protein bL25, found in Enterobacter sp. (strain 638).